The chain runs to 249 residues: uncharacterized protein (249 aa).

11–34 contacts NADP(+); the sequence is IFGGRSQIGGELARRLAAGATMVL. Residue Ser-142 coordinates substrate. Tyr-155 serves as the catalytic Proton acceptor.

Belongs to the short-chain dehydrogenases/reductases (SDR) family.

This is an uncharacterized protein from Mycobacterium tuberculosis (strain ATCC 25618 / H37Rv).